Consider the following 262-residue polypeptide: Dihydroorotate dehydrogenase B (NAD(+)), electron transfer subunit (262 aa).

The FAD-binding FR-type domain occupies 2 to 102 (SKVFDAKVLA…MGPLGRGFTL (101 aa)). FAD is bound by residues 53–56 (RPIS), 70–72 (LFR), and 77–78 (GT). Cys224, Cys229, Cys232, and Cys248 together coordinate [2Fe-2S] cluster.

This sequence belongs to the PyrK family. In terms of assembly, heterotetramer of 2 PyrK and 2 PyrD type B subunits. However, the metal reductase complex seems to be composed of a heterooctamer of 4 PyrK and 4 PyrD subunits. FAD is required as a cofactor. Requires [2Fe-2S] cluster as cofactor.

Its subcellular location is the cytoplasm. The protein operates within pyrimidine metabolism; UMP biosynthesis via de novo pathway; orotate from (S)-dihydroorotate (NAD(+) route): step 1/1. Functionally, responsible for channeling the electrons from the oxidation of dihydroorotate from the FMN redox center in the PyrD type B subunit to the ultimate electron acceptor NAD(+). Its function is as follows. Together with PyrD, also forms a metal reductase complex able to reduce Fe(III)-chelates to Fe(II)-chelates, as well as soluble Cr(VI) and U(VI), using NADH as electron donor. To a lesser extent, can also use NADPH as an electron donor. Is unable to reduce riboflavin and FMN with NADH as electron donor. May have an in vivo role in metal reduction in D.reducens, which is an organism capable of reducing contaminant heavy metals and radionuclides. This Desulforamulus reducens (strain ATCC BAA-1160 / DSM 100696 / MI-1) (Desulfotomaculum reducens) protein is Dihydroorotate dehydrogenase B (NAD(+)), electron transfer subunit.